The primary structure comprises 164 residues: CASP-like protein 1C1 (164 aa).

The Cytoplasmic segment spans residues 1-7 (MVKLTKR). Residues 8–28 (IGGLVLRLAAFGAALAALIVM) form a helical membrane-spanning segment. Topologically, residues 29-51 (ITSRERASFLAISLEAKYTDMAA) are extracellular. A helical transmembrane segment spans residues 52–72 (FKYFVIANAVVSVYSFLVLFL). Over 73–80 (PKESLLWK) the chain is Cytoplasmic. The chain crosses the membrane as a helical span at residues 81 to 101 (FVVVLDLVMTMLLTSSLSAAL). Residues 102 to 129 (AVAQVGKKGNANAGWLPICGQVPKFCDQ) lie on the Extracellular side of the membrane. The helical transmembrane segment at 130-150 (ITGALIAGFVALVLYVLLLLY) threads the bilayer. The Cytoplasmic segment spans residues 151-164 (SLHAVVDPFLLQKS).

This sequence belongs to the Casparian strip membrane proteins (CASP) family. Homodimer and heterodimers. Expressed in the stele of the root.

It is found in the cell membrane. This Arabidopsis thaliana (Mouse-ear cress) protein is CASP-like protein 1C1.